A 111-amino-acid polypeptide reads, in one-letter code: Flagellar hook-basal body complex protein FliE (111 aa).

Belongs to the FliE family.

It is found in the bacterial flagellum basal body. This is Flagellar hook-basal body complex protein FliE from Brucella abortus (strain S19).